The chain runs to 61 residues: UPF0391 membrane protein Bpro_0066 (61 aa).

2 helical membrane-spanning segments follow: residues 5–25 (AIIF…GVAA) and 33–53 (ILFG…ALGV).

The protein belongs to the UPF0391 family.

It localises to the cell membrane. The sequence is that of UPF0391 membrane protein Bpro_0066 from Polaromonas sp. (strain JS666 / ATCC BAA-500).